The chain runs to 132 residues: L-ectoine synthase (132 aa).

This sequence belongs to the ectoine synthase family.

The catalysed reaction is (2S)-4-acetamido-2-aminobutanoate = L-ectoine + H2O. The protein operates within amine and polyamine biosynthesis; ectoine biosynthesis; L-ectoine from L-aspartate 4-semialdehyde: step 3/3. Catalyzes the circularization of gamma-N-acetyl-alpha,gamma-diaminobutyric acid (ADABA) to ectoine (1,4,5,6-tetrahydro-2-methyl-4-pyrimidine carboxylic acid), which is an excellent osmoprotectant. This Bordetella avium (strain 197N) protein is L-ectoine synthase.